The sequence spans 786 residues: Endonuclease MutS2 (786 aa).

334 to 341 provides a ligand contact to ATP; sequence GPNTGGKT. In terms of domain architecture, Smr spans 711–786; sequence LDLRGERYEN…GNGATVVYFK (76 aa).

This sequence belongs to the DNA mismatch repair MutS family. MutS2 subfamily. Homodimer. Binds to stalled ribosomes, contacting rRNA.

Endonuclease that is involved in the suppression of homologous recombination and thus may have a key role in the control of bacterial genetic diversity. Its function is as follows. Acts as a ribosome collision sensor, splitting the ribosome into its 2 subunits. Detects stalled/collided 70S ribosomes which it binds and splits by an ATP-hydrolysis driven conformational change. Acts upstream of the ribosome quality control system (RQC), a ribosome-associated complex that mediates the extraction of incompletely synthesized nascent chains from stalled ribosomes and their subsequent degradation. Probably generates substrates for RQC. The chain is Endonuclease MutS2 from Ligilactobacillus salivarius (strain UCC118) (Lactobacillus salivarius).